The primary structure comprises 314 residues: Nitrilase 2 (314 aa).

The 263-residue stretch at 7-269 (VTLGVAQAAP…ETLITARVST (263 aa)) folds into the CN hydrolase domain. Glutamate 47 acts as the Proton acceptor in catalysis. Residue lysine 132 is the Proton donor of the active site. Residue cysteine 166 is the Nucleophile of the active site.

It belongs to the carbon-nitrogen hydrolase superfamily. Nitrilase family.

It carries out the reaction a nitrile + 2 H2O = a carboxylate + NH4(+). Its function is as follows. Nitrilases catalyze the mild hydrolytic conversion of organonitriles directly to the corresponding carboxylic acids. Catalyzes the production of aryllactic acid derivatives. Mediates the hydrolysis of cyanohydrin to (S)-phenyllactic acid. This chain is Nitrilase 2, found in Unknown prokaryotic organism.